Reading from the N-terminus, the 259-residue chain is Probable metal transport system ATP-binding protein TC_0339 (259 aa).

Residues 9-241 enclose the ABC transporter domain; sequence WAVDDLCVNY…AIFQAYGCEL (233 aa). Residue 41-48 participates in ATP binding; the sequence is GPNGAGKS.

This sequence belongs to the ABC transporter superfamily.

The protein resides in the cell inner membrane. Part of an ATP-driven transport system TC_0338/TC_0339/TC_0341/TC_0342 for a metal. Probably responsible for energy coupling to the transport system. The sequence is that of Probable metal transport system ATP-binding protein TC_0339 from Chlamydia muridarum (strain MoPn / Nigg).